The primary structure comprises 403 residues: Argininosuccinate synthase (403 aa).

ATP contacts are provided by residues 13 to 21 and A40; that span reads AYSGGLDTS. 2 residues coordinate L-citrulline: Y92 and S97. Position 122 (G122) interacts with ATP. Residues T124, N128, and D129 each contribute to the L-aspartate site. N128 is an L-citrulline binding site. Positions 132, 181, 190, 266, and 278 each coordinate L-citrulline.

This sequence belongs to the argininosuccinate synthase family. Type 1 subfamily. As to quaternary structure, homotetramer.

It is found in the cytoplasm. It carries out the reaction L-citrulline + L-aspartate + ATP = 2-(N(omega)-L-arginino)succinate + AMP + diphosphate + H(+). It functions in the pathway amino-acid biosynthesis; L-arginine biosynthesis; L-arginine from L-ornithine and carbamoyl phosphate: step 2/3. In Aliivibrio salmonicida (strain LFI1238) (Vibrio salmonicida (strain LFI1238)), this protein is Argininosuccinate synthase.